We begin with the raw amino-acid sequence, 428 residues long: Histidine--tRNA ligase (428 aa).

This sequence belongs to the class-II aminoacyl-tRNA synthetase family. In terms of assembly, homodimer.

Its subcellular location is the cytoplasm. The enzyme catalyses tRNA(His) + L-histidine + ATP = L-histidyl-tRNA(His) + AMP + diphosphate + H(+). The polypeptide is Histidine--tRNA ligase (Thermosynechococcus vestitus (strain NIES-2133 / IAM M-273 / BP-1)).